Consider the following 700-residue polypeptide: MKKLFVTCIVFFSILSPALLIAQQTGTAELIMKRVMLDLKKPLRNMDKVAEKNLNTLQPDGSWKDVPYKDDAMTNWLPNNHLLQLETIIQAYIEKDSHYYGDDKVFDQISKAFKYWYDSDPKSRNWWHNEIATPQALGEMLILMRYGKKPLDEALVHKLTERMKRGEPEKKTGANKTDIALHYFYRALLTSDEALLSFAVKELFYPVQFVHYEEGLQYDYSYLQHGPQLQISSYGAVFITGVLKLANYVRDTPYALSTEKLAIFSKYYRDSYLKAIRGSYMDFNVEGRGVSRPDILNKKAEKKRLLVAKMIDLKHTEEWADAIARTDSTVAAGYKIEPYHHQFWNGDYVQHLRPAYSFNVRMVSKRTRRSESGNKENLLGRYLSDGATNIQLRGPEYYNIMPVWEWDKIPGITSRDYLTDRPLTKLWGEQGSNDFAGGVSDGVYGASAYALDYDSLQAKKAWFFFDKEIVCLGAGINSNAPENITTTLNQSWLNGPVISTAGKTGRGKITTFKAQGQFWLLHDAIGYYFPEGANLSLSTQSQKGNWFHINNSHSKDEVSGDVFKLWINHGARPENAQYAYIVLPGINKPEEIKKYNGTAPKVLANTNQLQAVYHQQLDMVQAIFYTAGKLSVAGIEIETDKPCAVLIKHINGKQVIWAADPLQKEKTAVLSIRDLKTGKTNRVKIDFPQQEFAGATVELK.

A signal peptide spans 1–22; sequence MKKLFVTCIVFFSILSPALLIA. Residues His-225, Tyr-234, and Arg-288 contribute to the active site. Ser-328 carries an O-linked (Man...) serine glycan. Glu-405, Asp-407, Asp-416, and Tyr-417 together coordinate Ca(2+). The O-linked (Man...) serine glycan is linked to Ser-455.

Belongs to the polysaccharide lyase 8 family. Monomer. The cofactor is Ca(2+).

The catalysed reaction is Eliminative degradation of polysaccharides containing 1,4-beta-D-hexosaminyl and 1,3-beta-D-glucuronosyl linkages to disaccharides containing 4-deoxy-beta-D-gluc-4-enuronosyl groups.. This Pedobacter heparinus (strain ATCC 13125 / DSM 2366 / CIP 104194 / JCM 7457 / NBRC 12017 / NCIMB 9290 / NRRL B-14731 / HIM 762-3) protein is Chondroitinase-AC (cslA).